The chain runs to 583 residues: Putative rhophilin-2-like protein RHPN2P1 (583 aa).

A BRO1 domain is found at 26–375 (PLIPLGLKET…RLTYAQHQED (350 aa)). A PDZ domain is found at 412 to 490 (RSNRFTAEEG…DEIEMKVVSL (79 aa)).

In Homo sapiens (Human), this protein is Putative rhophilin-2-like protein RHPN2P1 (RHPN2P1).